The primary structure comprises 403 residues: PP2A regulatory subunit TAP46 (403 aa).

Disordered regions lie at residues glutamate 158–aspartate 184 and alanine 351–glycine 403. Composition is skewed to acidic residues over residues glutamate 174–aspartate 184 and glutamate 366–alanine 375. The segment covering alanine 376–proline 391 has biased composition (basic and acidic residues).

It belongs to the IGBP1/TAP42 family.

Involved in the regulation of the TOR signaling pathway. Seems to act as a regulator of PP2A catalytic activity. The chain is PP2A regulatory subunit TAP46 from Nicotiana tabacum (Common tobacco).